Consider the following 453-residue polypeptide: Ribulose bisphosphate carboxylase large chain (453 aa).

The propeptide occupies 1–2 (MS). An N-acetylproline modification is found at P3. N6,N6,N6-trimethyllysine is present on K14. 2 residues coordinate substrate: N123 and T173. Residue K175 is the Proton acceptor of the active site. K177 contacts substrate. The Mg(2+) site is built by K201, D203, and E204. K201 bears the N6-carboxylysine mark. Catalysis depends on H294, which acts as the Proton acceptor. Residues R295, H327, and S379 each contribute to the substrate site.

The protein belongs to the RuBisCO large chain family. Type I subfamily. In terms of assembly, heterohexadecamer of 8 large chains and 8 small chains; disulfide-linked. The disulfide link is formed within the large subunit homodimers. It depends on Mg(2+) as a cofactor. The disulfide bond which can form in the large chain dimeric partners within the hexadecamer appears to be associated with oxidative stress and protein turnover.

The protein resides in the plastid. Its subcellular location is the chloroplast. It catalyses the reaction 2 (2R)-3-phosphoglycerate + 2 H(+) = D-ribulose 1,5-bisphosphate + CO2 + H2O. The catalysed reaction is D-ribulose 1,5-bisphosphate + O2 = 2-phosphoglycolate + (2R)-3-phosphoglycerate + 2 H(+). RuBisCO catalyzes two reactions: the carboxylation of D-ribulose 1,5-bisphosphate, the primary event in carbon dioxide fixation, as well as the oxidative fragmentation of the pentose substrate in the photorespiration process. Both reactions occur simultaneously and in competition at the same active site. The chain is Ribulose bisphosphate carboxylase large chain from Galium corsicum.